A 263-amino-acid polypeptide reads, in one-letter code: GTP cyclohydrolase FolE2 (263 aa).

It belongs to the GTP cyclohydrolase IV family.

It catalyses the reaction GTP + H2O = 7,8-dihydroneopterin 3'-triphosphate + formate + H(+). Its pathway is cofactor biosynthesis; 7,8-dihydroneopterin triphosphate biosynthesis; 7,8-dihydroneopterin triphosphate from GTP: step 1/1. Its function is as follows. Converts GTP to 7,8-dihydroneopterin triphosphate. The sequence is that of GTP cyclohydrolase FolE2 from Nitrosospira multiformis (strain ATCC 25196 / NCIMB 11849 / C 71).